The chain runs to 306 residues: Homeobox protein CUP9 (306 aa).

Residues 75–123 (PAINSGGTSTTATPTASTVETSKTSSSAMDTQSQYGSSKKSKSASDDAK) are disordered. Low complexity predominate over residues 79–96 (SGGTSTTATPTASTVETS). Residues 97–110 (KTSSSAMDTQSQYG) show a composition bias toward polar residues. A DNA-binding region (homeobox; TALE-type) is located at residues 162–224 (NSGRRSNLPK…NVRRRKIFSD (63 aa)).

Belongs to the TALE/CUP9 homeobox family.

It localises to the nucleus. Functionally, probable DNA-binding protein which plays a role in protecting yeast cells against copper toxicity. May regulate the expression of important copper homeostatic genes. The sequence is that of Homeobox protein CUP9 (CUP9) from Saccharomyces cerevisiae (strain ATCC 204508 / S288c) (Baker's yeast).